Consider the following 468-residue polypeptide: Tubulin gamma chain (468 aa).

142–148 provides a ligand contact to GTP; sequence AGGTGSG.

This sequence belongs to the tubulin family.

It localises to the cytoplasm. The protein localises to the cytoskeleton. Its subcellular location is the microtubule organizing center. In terms of biological role, tubulin is the major constituent of microtubules. The gamma chain is found at microtubule organizing centers (MTOC) such as the spindle poles, suggesting that it is involved in the minus-end nucleation of microtubule assembly. The protein is Tubulin gamma chain (TUBG) of Chlamydomonas reinhardtii (Chlamydomonas smithii).